A 68-amino-acid polypeptide reads, in one-letter code: Small integral membrane protein 10-like protein 1 (68 aa).

A disordered region spans residues 1-21 (MAPAAAPSSLAVRASSPAATP).

This is Small integral membrane protein 10-like protein 1 from Homo sapiens (Human).